Consider the following 112-residue polypeptide: Protein Tat (112 aa).

The interaction with human CREBBP stretch occupies residues 1 to 24; it reads MDPVDPEMPPWHHPGSKPQTPCNN. The transactivation stretch occupies residues 1–48; it reads MDPVDPEMPPWHHPGSKPQTPCNNCYCKRCCYHCYVCFTKKGLGISHG. The Zn(2+) site is built by C22, C25, and C27. The interval 22 to 37 is cysteine-rich; that stretch reads CNNCYCKRCCYHCYVC. K28 carries the N6-acetyllysine; by host PCAF modification. The Zn(2+) site is built by C30, H33, C34, and C37. The tract at residues 38-48 is core; the sequence is FTKKGLGISHG. The segment at 45-112 is disordered; it reads ISHGRKKRRR…CNSCTRISGQ (68 aa). The Nuclear localization signal, RNA-binding (TAR), and protein transduction motif lies at 49-56; the sequence is RKKRRRPA. Residues 49–82 form an interaction with the host capping enzyme RNGTT region; sequence RKKRRRPAAAASYPDNKDPVPEQHTGRKQKRQEE. N6-acetyllysine; by host EP300 and GCN5L2 is present on residues K50 and K51. R52 and R53 each carry asymmetric dimethylarginine; by host PRMT6. Basic and acidic residues predominate over residues 63 to 91; sequence DNKDPVPEQHTGRKQKRQEEQEKKVEKET. The segment covering 93 to 112 has biased composition (polar residues); it reads PSGQPCHQDSCNSCTRISGQ.

The protein belongs to the lentiviruses Tat family. In terms of assembly, interacts with host CCNT1. Associates with the P-TEFb complex composed at least of Tat, P-TEFb (CDK9 and CCNT1), TAR RNA, RNA Pol II. Recruits the HATs CREBBP, TAF1/TFIID, EP300, PCAF and GCN5L2. Interacts with host KAT5/Tip60; this interaction targets the latter to degradation. Interacts with the host deacetylase SIRT1. Interacts with host capping enzyme RNGTT; this interaction stimulates RNGTT. Binds to host KDR, and to the host integrins ITGAV/ITGB3 and ITGA5/ITGB1. Interacts with host KPNB1/importin beta-1 without previous binding to KPNA1/importin alpha-1. Interacts with EIF2AK2. Interacts with host nucleosome assembly protein NAP1L1; this interaction may be required for the transport of Tat within the nucleus, since the two proteins interact at the nuclear rim. Interacts with host C1QBP/SF2P32; this interaction involves lysine-acetylated Tat. Interacts with the host chemokine receptors CCR2, CCR3 and CXCR4. Interacts with host DPP4/CD26; this interaction may trigger an anti-proliferative effect. Interacts with host LDLR. Interacts with the host extracellular matrix metalloproteinase MMP1. Interacts with host PRMT6; this interaction mediates Tat's methylation. Interacts with, and is ubiquitinated by MDM2/Hdm2. Interacts with host PSMC3 and HTATIP2. Interacts with STAB1; this interaction may overcome SATB1-mediated repression of IL2 and IL2RA (interleukin) in T cells by binding to the same domain than HDAC1. Interacts (when acetylated) with human CDK13, thereby increasing HIV-1 mRNA splicing and promoting the production of the doubly spliced HIV-1 protein Nef. Interacts with host TBP; this interaction modulates the activity of transcriptional pre-initiation complex. Interacts with host RELA. Interacts with host PLSCR1; this interaction negatively regulates Tat transactivation activity by altering its subcellular distribution. Post-translationally, asymmetrical arginine methylation by host PRMT6 seems to diminish the transactivation capacity of Tat and affects the interaction with host CCNT1. In terms of processing, acetylation by EP300, CREBBP, GCN5L2/GCN5 and PCAF regulates the transactivation activity of Tat. EP300-mediated acetylation of Lys-50 promotes dissociation of Tat from the TAR RNA through the competitive binding to PCAF's bromodomain. In addition, the non-acetylated Tat's N-terminus can also interact with PCAF. PCAF-mediated acetylation of Lys-28 enhances Tat's binding to CCNT1. Lys-50 is deacetylated by SIRT1. Polyubiquitination by host MDM2 does not target Tat to degradation, but activates its transactivation function and fosters interaction with CCNT1 and TAR RNA. Post-translationally, phosphorylated by EIF2AK2 on serine and threonine residues adjacent to the basic region important for TAR RNA binding and function. Phosphorylation of Tat by EIF2AK2 is dependent on the prior activation of EIF2AK2 by dsRNA.

Its subcellular location is the host nucleus. The protein resides in the host nucleolus. The protein localises to the host cytoplasm. It is found in the secreted. Functionally, transcriptional activator that increases RNA Pol II processivity, thereby increasing the level of full-length viral transcripts. Recognizes a hairpin structure at the 5'-LTR of the nascent viral mRNAs referred to as the transactivation responsive RNA element (TAR) and recruits the cyclin T1-CDK9 complex (P-TEFb complex) that will in turn hyperphosphorylate the RNA polymerase II to allow efficient elongation. The CDK9 component of P-TEFb and other Tat-activated kinases hyperphosphorylate the C-terminus of RNA Pol II that becomes stabilized and much more processive. Other factors such as HTATSF1/Tat-SF1, SUPT5H/SPT5, and HTATIP2 are also important for Tat's function. Besides its effect on RNA Pol II processivity, Tat induces chromatin remodeling of proviral genes by recruiting the histone acetyltransferases (HATs) CREBBP, EP300 and PCAF to the chromatin. This also contributes to the increase in proviral transcription rate, especially when the provirus integrates in transcriptionally silent region of the host genome. To ensure maximal activation of the LTR, Tat mediates nuclear translocation of NF-kappa-B by interacting with host RELA. Through its interaction with host TBP, Tat may also modulate transcription initiation. Tat can reactivate a latently infected cell by penetrating in it and transactivating its LTR promoter. In the cytoplasm, Tat is thought to act as a translational activator of HIV-1 mRNAs. Extracellular circulating Tat can be endocytosed by surrounding uninfected cells via the binding to several surface receptors such as CD26, CXCR4, heparan sulfate proteoglycans (HSPG) or LDLR. Neurons are rarely infected, but they internalize Tat via their LDLR. Through its interaction with nuclear HATs, Tat is potentially able to control the acetylation-dependent cellular gene expression. Modulates the expression of many cellular genes involved in cell survival, proliferation or in coding for cytokines or cytokine receptors. Tat plays a role in T-cell and neurons apoptosis. Tat induced neurotoxicity and apoptosis probably contribute to neuroAIDS. Circulating Tat also acts as a chemokine-like and/or growth factor-like molecule that binds to specific receptors on the surface of the cells, affecting many cellular pathways. In the vascular system, Tat binds to ITGAV/ITGB3 and ITGA5/ITGB1 integrins dimers at the surface of endothelial cells and competes with bFGF for heparin-binding sites, leading to an excess of soluble bFGF. The polypeptide is Protein Tat (Homo sapiens (Human)).